The sequence spans 353 residues: Paraneoplastic antigen Ma1 homolog (353 aa).

The protein belongs to the PNMA family. In terms of tissue distribution, predominantly expressed in testis. Very low levels in the brain, including in the piriform cortex, hippocampus and some subcortical nuclei.

It localises to the nucleus. It is found in the nucleolus. This chain is Paraneoplastic antigen Ma1 homolog (Pnma1), found in Mus musculus (Mouse).